Here is a 160-residue protein sequence, read N- to C-terminus: 6,7-dimethyl-8-ribityllumazine synthase (160 aa).

5-amino-6-(D-ribitylamino)uracil is bound by residues Trp-27, 59 to 61, and 81 to 83; these read AIE and VVI. 86–87 is a binding site for (2S)-2-hydroxy-3-oxobutyl phosphate; it reads ET. The active-site Proton donor is the His-89. Asn-114 lines the 5-amino-6-(D-ribitylamino)uracil pocket. Arg-128 is a binding site for (2S)-2-hydroxy-3-oxobutyl phosphate.

The protein belongs to the DMRL synthase family. In terms of assembly, homopentamer.

The catalysed reaction is (2S)-2-hydroxy-3-oxobutyl phosphate + 5-amino-6-(D-ribitylamino)uracil = 6,7-dimethyl-8-(1-D-ribityl)lumazine + phosphate + 2 H2O + H(+). Its pathway is cofactor biosynthesis; riboflavin biosynthesis; riboflavin from 2-hydroxy-3-oxobutyl phosphate and 5-amino-6-(D-ribitylamino)uracil: step 1/2. Its function is as follows. Catalyzes the formation of 6,7-dimethyl-8-ribityllumazine by condensation of 5-amino-6-(D-ribitylamino)uracil with 3,4-dihydroxy-2-butanone 4-phosphate. This is the penultimate step in the biosynthesis of riboflavin. The chain is 6,7-dimethyl-8-ribityllumazine synthase from Mycobacterium ulcerans (strain Agy99).